Here is a 418-residue protein sequence, read N- to C-terminus: Tyrosine--tRNA ligase 1 (418 aa).

L-tyrosine is bound at residue Tyr-34. The 'HIGH' region motif lies at 39–48 (PTADSLHLGH). 2 residues coordinate L-tyrosine: Tyr-169 and Gln-173. The 'KMSKS' region signature appears at 229–233 (KFGKS). Residue Lys-232 coordinates ATP. One can recognise an S4 RNA-binding domain in the interval 352–418 (LNIVELLVNA…GKKKNFVLTY (67 aa)).

This sequence belongs to the class-I aminoacyl-tRNA synthetase family. TyrS type 1 subfamily. As to quaternary structure, homodimer.

It is found in the cytoplasm. It carries out the reaction tRNA(Tyr) + L-tyrosine + ATP = L-tyrosyl-tRNA(Tyr) + AMP + diphosphate + H(+). Its function is as follows. Catalyzes the attachment of tyrosine to tRNA(Tyr) in a two-step reaction: tyrosine is first activated by ATP to form Tyr-AMP and then transferred to the acceptor end of tRNA(Tyr). The chain is Tyrosine--tRNA ligase 1 from Streptococcus thermophilus (strain CNRZ 1066).